Here is a 179-residue protein sequence, read N- to C-terminus: RNA pyrophosphohydrolase (179 aa).

The region spanning 6–149 (GYRANVGIVI…KKPIYEDMLK (144 aa)) is the Nudix hydrolase domain. The Nudix box motif lies at 38–59 (GGIDFGESELDALFRELNEEIG).

The protein belongs to the Nudix hydrolase family. RppH subfamily. A divalent metal cation serves as cofactor.

Accelerates the degradation of transcripts by removing pyrophosphate from the 5'-end of triphosphorylated RNA, leading to a more labile monophosphorylated state that can stimulate subsequent ribonuclease cleavage. The sequence is that of RNA pyrophosphohydrolase from Ruthia magnifica subsp. Calyptogena magnifica.